Consider the following 63-residue polypeptide: Large ribosomal subunit protein bL35 (63 aa).

The segment covering 1 to 15 (MPKIKTHRGAAKRFK) has biased composition (basic residues). A disordered region spans residues 1 to 26 (MPKIKTHRGAAKRFKQTAGGKWKGSH).

It belongs to the bacterial ribosomal protein bL35 family.

The sequence is that of Large ribosomal subunit protein bL35 from Pelotomaculum thermopropionicum (strain DSM 13744 / JCM 10971 / SI).